Reading from the N-terminus, the 276-residue chain is NH(3)-dependent NAD(+) synthetase (276 aa).

G43–S50 is an ATP binding site. Mg(2+) is bound at residue D49. Residue R146 participates in deamido-NAD(+) binding. Residue T166 coordinates ATP. Position 171 (E171) interacts with Mg(2+). Residues K179 and D186 each coordinate deamido-NAD(+). ATP contacts are provided by K195 and T217. Deamido-NAD(+) is bound at residue H266–K267.

The protein belongs to the NAD synthetase family. As to quaternary structure, homodimer.

It catalyses the reaction deamido-NAD(+) + NH4(+) + ATP = AMP + diphosphate + NAD(+) + H(+). It functions in the pathway cofactor biosynthesis; NAD(+) biosynthesis; NAD(+) from deamido-NAD(+) (ammonia route): step 1/1. Functionally, catalyzes the ATP-dependent amidation of deamido-NAD to form NAD. Uses ammonia as a nitrogen source. The protein is NH(3)-dependent NAD(+) synthetase of Shewanella baltica (strain OS223).